Consider the following 340-residue polypeptide: DNA-directed RNA polymerase subunit alpha (340 aa).

An alpha N-terminal domain (alpha-NTD) region spans residues 1–226; it reads MLIAQRPSLT…ELFGLARELN (226 aa). An alpha C-terminal domain (alpha-CTD) region spans residues 243-340; that stretch reads LAADLALPIE…DAGFVETEQY (98 aa).

Belongs to the RNA polymerase alpha chain family. Homodimer. The RNAP catalytic core consists of 2 alpha, 1 beta, 1 beta' and 1 omega subunit. When a sigma factor is associated with the core the holoenzyme is formed, which can initiate transcription. Post-translationally, the last 19 amino acids in the C-terminal part are cleaved in the spore.

It catalyses the reaction RNA(n) + a ribonucleoside 5'-triphosphate = RNA(n+1) + diphosphate. In terms of biological role, DNA-dependent RNA polymerase catalyzes the transcription of DNA into RNA using the four ribonucleoside triphosphates as substrates. This Streptomyces granaticolor protein is DNA-directed RNA polymerase subunit alpha.